The primary structure comprises 220 residues: Iron-sulfur cluster repair protein YtfE (220 aa).

It belongs to the RIC family. YtfE subfamily. Homodimer.

It localises to the cytoplasm. Functionally, di-iron-containing protein involved in the repair of iron-sulfur clusters damaged by oxidative and nitrosative stress conditions. The polypeptide is Iron-sulfur cluster repair protein YtfE (Shigella boydii serotype 4 (strain Sb227)).